The sequence spans 827 residues: DNA gyrase subunit A (827 aa).

Residues 38 to 501 (LPDARDGLKP…SYENIDIEDL (464 aa)) enclose the Topo IIA-type catalytic domain. Tyr126 (O-(5'-phospho-DNA)-tyrosine intermediate) is an active-site residue. The GyrA-box signature appears at 528 to 534 (QNRGGKG).

Belongs to the type II topoisomerase GyrA/ParC subunit family. Heterotetramer, composed of two GyrA and two GyrB chains. In the heterotetramer, GyrA contains the active site tyrosine that forms a transient covalent intermediate with DNA, while GyrB binds cofactors and catalyzes ATP hydrolysis.

It localises to the cytoplasm. The enzyme catalyses ATP-dependent breakage, passage and rejoining of double-stranded DNA.. A type II topoisomerase that negatively supercoils closed circular double-stranded (ds) DNA in an ATP-dependent manner to modulate DNA topology and maintain chromosomes in an underwound state. Negative supercoiling favors strand separation, and DNA replication, transcription, recombination and repair, all of which involve strand separation. Also able to catalyze the interconversion of other topological isomers of dsDNA rings, including catenanes and knotted rings. Type II topoisomerases break and join 2 DNA strands simultaneously in an ATP-dependent manner. The polypeptide is DNA gyrase subunit A (Helicobacter pylori (strain ATCC 700392 / 26695) (Campylobacter pylori)).